The sequence spans 316 residues: Transaldolase 2 (316 aa).

Lys-131 (schiff-base intermediate with substrate) is an active-site residue.

Belongs to the transaldolase family. Type 1 subfamily. As to quaternary structure, homodimer.

It is found in the cytoplasm. The enzyme catalyses D-sedoheptulose 7-phosphate + D-glyceraldehyde 3-phosphate = D-erythrose 4-phosphate + beta-D-fructose 6-phosphate. Its pathway is carbohydrate degradation; pentose phosphate pathway; D-glyceraldehyde 3-phosphate and beta-D-fructose 6-phosphate from D-ribose 5-phosphate and D-xylulose 5-phosphate (non-oxidative stage): step 2/3. In terms of biological role, transaldolase is important for the balance of metabolites in the pentose-phosphate pathway. The sequence is that of Transaldolase 2 from Salmonella choleraesuis (strain SC-B67).